Consider the following 62-residue polypeptide: Putative antitoxin AF_1095 (62 aa).

Belongs to the UPF0165 family.

Its function is as follows. Possibly the antitoxin component of a type II toxin-antitoxin (TA) system. This chain is Putative antitoxin AF_1095, found in Archaeoglobus fulgidus (strain ATCC 49558 / DSM 4304 / JCM 9628 / NBRC 100126 / VC-16).